The following is a 256-amino-acid chain: Gluconate 5-dehydrogenase (256 aa).

Leu-15–Val-39 contacts NADP(+). Position 147 (Ser-147) interacts with substrate. Residue Tyr-160 is the Proton acceptor of the active site.

This sequence belongs to the short-chain dehydrogenases/reductases (SDR) family. In terms of assembly, homodimer.

Its subcellular location is the cytoplasm. The catalysed reaction is D-gluconate + NADP(+) = 5-dehydro-D-gluconate + NADPH + H(+). Catalyzes the reversible NADP-dependent oxidation of gluconate to 5-ketogluconate. Is involved in the non-phosphorylative, ketogenic oxidation of glucose. Is almost inactive with NAD as cosubstrate. Displays high substrate specificity since D-Glucose, D-sorbitol, and D-mannitol are not oxidized by the enzyme, and 2-ketogluconate and L-sorbose are not reduced. Can accept D-fructose as a substrate, with a rate that is only 10% of the rate of 5-ketogluconate reduction. The protein is Gluconate 5-dehydrogenase of Gluconobacter oxydans (strain 621H) (Gluconobacter suboxydans).